The chain runs to 86 residues: Large ribosomal subunit protein bL27c (86 aa).

The disordered stretch occupies residues 1–27 (MAHKKGSGSTRNGRDSNSKRLGVKKYG).

This sequence belongs to the bacterial ribosomal protein bL27 family.

Its subcellular location is the plastid. It localises to the chloroplast. The protein is Large ribosomal subunit protein bL27c of Pyropia yezoensis (Susabi-nori).